The following is a 270-amino-acid chain: 3-phenylpropionate-dihydrodiol/cinnamic acid-dihydrodiol dehydrogenase (270 aa).

NAD(+) is bound at residue F10–A34. S143 contributes to the substrate binding site. Y156 serves as the catalytic Proton acceptor.

It belongs to the short-chain dehydrogenases/reductases (SDR) family.

The enzyme catalyses 3-(cis-5,6-dihydroxycyclohexa-1,3-dien-1-yl)propanoate + NAD(+) = 3-(2,3-dihydroxyphenyl)propanoate + NADH + H(+). The catalysed reaction is (2E)-3-(cis-5,6-dihydroxycyclohexa-1,3-dien-1-yl)prop-2-enoate + NAD(+) = (2E)-3-(2,3-dihydroxyphenyl)prop-2-enoate + NADH + H(+). The protein operates within aromatic compound metabolism; 3-phenylpropanoate degradation. Functionally, converts 3-phenylpropionate-dihydrodiol (PP-dihydrodiol) and cinnamic acid-dihydrodiol (CI-dihydrodiol) into 3-(2,3-dihydroxylphenyl)propanoic acid (DHPP) and 2,3-dihydroxicinnamic acid (DHCI), respectively. The chain is 3-phenylpropionate-dihydrodiol/cinnamic acid-dihydrodiol dehydrogenase from Escherichia coli (strain K12 / MC4100 / BW2952).